We begin with the raw amino-acid sequence, 292 residues long: Protease HtpX homolog (292 aa).

Helical transmembrane passes span 4–24 (ILLFVLTNLAVVLVLGVVASL) and 39–59 (GALLGFALVMGFGGAFISLLI). Residue His144 participates in Zn(2+) binding. The active site involves Glu145. A Zn(2+)-binding site is contributed by His148. Helical transmembrane passes span 159 to 179 (LIQGVMNTFVVFLSRVIGYAV) and 199 to 219 (VTTIVLDIALGFVAAIIVAWF). Glu224 is a binding site for Zn(2+).

Belongs to the peptidase M48B family. Zn(2+) is required as a cofactor.

It is found in the cell inner membrane. The sequence is that of Protease HtpX homolog from Verminephrobacter eiseniae (strain EF01-2).